Consider the following 572-residue polypeptide: Phosphoenolpyruvate-protein phosphotransferase (572 aa).

The Tele-phosphohistidine intermediate role is filled by histidine 191. The phosphoenolpyruvate site is built by arginine 298 and arginine 334. Mg(2+)-binding residues include glutamate 433 and aspartate 457. Phosphoenolpyruvate contacts are provided by residues asparagine 456 to aspartate 457 and arginine 467. Catalysis depends on cysteine 504, which acts as the Proton donor.

The protein belongs to the PEP-utilizing enzyme family. As to quaternary structure, homodimer. Requires Mg(2+) as cofactor.

The protein resides in the cytoplasm. The catalysed reaction is L-histidyl-[protein] + phosphoenolpyruvate = N(pros)-phospho-L-histidyl-[protein] + pyruvate. In terms of biological role, general (non sugar-specific) component of the phosphoenolpyruvate-dependent sugar phosphotransferase system (sugar PTS). This major carbohydrate active-transport system catalyzes the phosphorylation of incoming sugar substrates concomitantly with their translocation across the cell membrane. Enzyme I transfers the phosphoryl group from phosphoenolpyruvate (PEP) to the phosphoryl carrier protein (HPr). This chain is Phosphoenolpyruvate-protein phosphotransferase (ptsI), found in Staphylococcus aureus (strain Mu50 / ATCC 700699).